We begin with the raw amino-acid sequence, 194 residues long: ATP-dependent Clp protease proteolytic subunit (194 aa).

Ser-97 functions as the Nucleophile in the catalytic mechanism. His-122 is an active-site residue.

This sequence belongs to the peptidase S14 family. As to quaternary structure, fourteen ClpP subunits assemble into 2 heptameric rings which stack back to back to give a disk-like structure with a central cavity, resembling the structure of eukaryotic proteasomes.

It localises to the cytoplasm. The catalysed reaction is Hydrolysis of proteins to small peptides in the presence of ATP and magnesium. alpha-casein is the usual test substrate. In the absence of ATP, only oligopeptides shorter than five residues are hydrolyzed (such as succinyl-Leu-Tyr-|-NHMec, and Leu-Tyr-Leu-|-Tyr-Trp, in which cleavage of the -Tyr-|-Leu- and -Tyr-|-Trp bonds also occurs).. Its function is as follows. Cleaves peptides in various proteins in a process that requires ATP hydrolysis. Has a chymotrypsin-like activity. Plays a major role in the degradation of misfolded proteins. This Campylobacter jejuni subsp. jejuni serotype O:23/36 (strain 81-176) protein is ATP-dependent Clp protease proteolytic subunit.